The sequence spans 219 residues: Proteasome subunit beta (219 aa).

The propeptide at 1-14 (MISGSEYHKEYMKG) is removed in mature form; by autocatalysis. Thr15 serves as the catalytic Nucleophile.

The protein belongs to the peptidase T1B family. As to quaternary structure, the 20S proteasome core is composed of 14 alpha and 14 beta subunits that assemble into four stacked heptameric rings, resulting in a barrel-shaped structure. The two inner rings, each composed of seven catalytic beta subunits, are sandwiched by two outer rings, each composed of seven alpha subunits. The catalytic chamber with the active sites is on the inside of the barrel. Has a gated structure, the ends of the cylinder being occluded by the N-termini of the alpha-subunits. Is capped at one or both ends by the proteasome regulatory ATPase, PAN.

It is found in the cytoplasm. The enzyme catalyses Cleavage of peptide bonds with very broad specificity.. Its activity is regulated as follows. The formation of the proteasomal ATPase PAN-20S proteasome complex, via the docking of the C-termini of PAN into the intersubunit pockets in the alpha-rings, triggers opening of the gate for substrate entry. Interconversion between the open-gate and close-gate conformations leads to a dynamic regulation of the 20S proteasome proteolysis activity. Component of the proteasome core, a large protease complex with broad specificity involved in protein degradation. This chain is Proteasome subunit beta, found in Methanococcus vannielii (strain ATCC 35089 / DSM 1224 / JCM 13029 / OCM 148 / SB).